A 186-amino-acid chain; its full sequence is UPF0301 protein CV_3909 (186 aa).

It belongs to the UPF0301 (AlgH) family.

This Chromobacterium violaceum (strain ATCC 12472 / DSM 30191 / JCM 1249 / CCUG 213 / NBRC 12614 / NCIMB 9131 / NCTC 9757 / MK) protein is UPF0301 protein CV_3909.